A 502-amino-acid chain; its full sequence is Ubiquilin (502 aa).

Residues 8–83 (IKVHVKSPSN…VHLVIRNQAR (76 aa)) enclose the Ubiquitin-like domain. Positions 84–115 (PTPAPAAATPTASSAPSSNPTPSSQPNPTNNP) are enriched in low complexity. A disordered region spans residues 84–136 (PTPAPAAATPTASSAPSSNPTPSSQPNPTNNPFAAMGGMGSPADILNNPDAMR). STI1 domains follow at residues 124-157 (SPAD…MRTI) and 161-200 (NPQF…FQEM). The span at 235–251 (SATNSLSGNPFASLRGD) shows a compositional bias: polar residues. Residues 235 to 294 (SATNSLSGNPFASLRGDQSSEPRVDRAGQENNEALPNPWASNANQATNNQSNNRSADFNS) form a disordered region. Over residues 252 to 262 (QSSEPRVDRAG) the composition is skewed to basic and acidic residues. The segment covering 274–290 (ASNANQATNNQSNNRSA) has biased composition (low complexity). STI1 domains are found at residues 289 to 327 (SADF…INSI) and 351 to 387 (NPQI…SEAF). One can recognise a UBA domain in the interval 455 to 501 (PVNPEQTYASQLEQLQSMGFSDRARNVAALTATFGDLNAAVERLLNS).

Expressed in the pharynx, hypodermis, intestine and head neurons. Upon ER stress, expressed predominantly in pharyngeal muscle, hypodermis and intestine.

Functionally, may play a role in the ER-associated protein degradation pathway (ERAD) possibly via its interaction with ER-localized proteins ubxn-4 and cdc-48.1 and/or cdc48.2, providing a link between the polyubiquitinated ERAD substrates and the proteasome. Also plays an important role in the regulation of other protein degradation mechanisms and pathways including ubiquitin-proteasome system (UPS) and autophagy. Mediates the proteasomal targeting of misfolded or accumulated proteins for degradation by binding (via UBA domain) to their polyubiquitin chains and by interacting (via ubiquitin-like domain) with the subunits of the proteasome. Collaborates with POST (F36D4.5) in the export of ubiquitinated proteins from the nucleus to the cytoplasm. Also acts as a regulator of DNA repair by inhibiting homologous recombination repair, thereby redirecting double-strand break repair toward non-homologous end joining (NHEJ). This is Ubiquilin from Caenorhabditis elegans.